We begin with the raw amino-acid sequence, 58 residues long: UPF0391 membrane protein GM21_0108 (58 aa).

The next 2 helical transmembrane spans lie at 4 to 24 (WALIFFIIAIIAAVFGFGGIA) and 33 to 53 (VLFYLFLVVAVVMLVSALLAG).

It belongs to the UPF0391 family.

The protein localises to the cell membrane. The chain is UPF0391 membrane protein GM21_0108 from Geobacter sp. (strain M21).